We begin with the raw amino-acid sequence, 1087 residues long: Formin-H (1087 aa).

Over residues 1 to 23 (MSFDLESNSSGGSTIGRNSSIRL) the composition is skewed to polar residues. The segment at 1 to 25 (MSFDLESNSSGGSTIGRNSSIRLSS) is disordered. In terms of domain architecture, GBD/FH3 spans 34-394 (VSLNEIIDLD…QLEDELKIHP (361 aa)). Low complexity-rich tracts occupy residues 416 to 436 (FGFG…SMAK) and 549 to 558 (SPGSTLSPSP). Disordered stretches follow at residues 416–445 (FGFG…DNEE), 549–625 (SPGS…PAKP), and 1048–1087 (VDSL…QLKK). The stretch at 433–461 (SMAKTELKKDNEEKQKTIEHLLKQLNKFS) forms a coiled coil. Residues 569–588 (FGITSSSIHTSTDKLTNSTE) show a composition bias toward polar residues. The region spanning 589–615 (PILGSPPPPPPPPMSGGGGPPPPPPPP) is the FH1 domain. Pro residues predominate over residues 592 to 616 (GSPPPPPPPPMSGGGGPPPPPPPPG). An FH2 domain is found at 623-1016 (AKPIIKPSVK…ENSKMEDPEK (394 aa)). Positions 1013–1051 (DPEKGGLQDLSSQIRSGQLFKDRRVGDSVIAQMQNVDSL) constitute a DAD domain.

This sequence belongs to the formin homology family. Diaphanous subfamily. Interacts with vasP, proB/profilin-2 and rac1A. Interacts (via GBD/FH3 domain) with activated Rho-GTPases.

It localises to the cytoplasm. It is found in the cell cortex. The protein resides in the cytoskeleton. In terms of biological role, formins play an important role in the nucleation of actin and the formation of linear actin filaments. Important for cell migration and formation, elongation and maintenance of filopodia. Specifically controls filopodial dynamics by regulating actin turnover at the barbed ends of actin filaments. The protein is Formin-H (forH) of Dictyostelium discoideum (Social amoeba).